The sequence spans 158 residues: Small ribosomal subunit protein uS7 (158 aa).

The protein belongs to the universal ribosomal protein uS7 family. As to quaternary structure, part of the 30S ribosomal subunit. Contacts proteins S9 and S11.

In terms of biological role, one of the primary rRNA binding proteins, it binds directly to 16S rRNA where it nucleates assembly of the head domain of the 30S subunit. Is located at the subunit interface close to the decoding center, probably blocks exit of the E-site tRNA. The protein is Small ribosomal subunit protein uS7 of Gluconacetobacter diazotrophicus (strain ATCC 49037 / DSM 5601 / CCUG 37298 / CIP 103539 / LMG 7603 / PAl5).